Reading from the N-terminus, the 332-residue chain is Nucleoid-associated protein VP2128 (332 aa).

Belongs to the YejK family.

The protein localises to the cytoplasm. Its subcellular location is the nucleoid. This Vibrio parahaemolyticus serotype O3:K6 (strain RIMD 2210633) protein is Nucleoid-associated protein VP2128.